A 275-amino-acid chain; its full sequence is Voltage-dependent calcium channel gamma-5 subunit (275 aa).

A run of 4 helical transmembrane segments spans residues Ala-8–Val-28, Phe-103–Ile-123, Ile-129–Leu-149, and Phe-181–Met-201.

It belongs to the PMP-22/EMP/MP20 family. CACNG subfamily. In terms of assembly, the L-type calcium channel is composed of five subunits: alpha-1, alpha-2/delta, beta and gamma. Acts as an auxiliary subunit for AMPA-selective glutamate receptors (AMPARs). Found in a complex with GRIA1, GRIA2, GRIA3, GRIA4, CNIH2, CNIH3, CACNG2, CACNG3, CACNG4, CACNG7 and CACNG8. Interacts with GRIA1, GRIA2, GRIA3 and GRIA4. As to expression, brain. Enriched in Bergman glia, as well as a variety of neuronal populations including locus coeruleus, olfactory bulb, lateral septal nucleus, interpeduncular nucleus, and the CA2 and rostral/medial CA1 regions of hippocampus.

It localises to the membrane. Its subcellular location is the postsynaptic density membrane. Regulates the gating properties of AMPA-selective glutamate receptors (AMPARs). Modulates their gating properties by accelerating their rates of activation, deactivation and desensitization. Displays subunit-specific AMPA receptor regulation. Shows specificity for GRIA1, GRIA4 and the long isoform of GRIA2. Thought to stabilize the calcium channel in an inactivated (closed) state. This Mus musculus (Mouse) protein is Voltage-dependent calcium channel gamma-5 subunit (Cacng5).